The chain runs to 207 residues: Large ribosomal subunit protein uL4 (207 aa).

The disordered stretch occupies residues His-49–Ile-78.

This sequence belongs to the universal ribosomal protein uL4 family. As to quaternary structure, part of the 50S ribosomal subunit.

Functionally, one of the primary rRNA binding proteins, this protein initially binds near the 5'-end of the 23S rRNA. It is important during the early stages of 50S assembly. It makes multiple contacts with different domains of the 23S rRNA in the assembled 50S subunit and ribosome. Forms part of the polypeptide exit tunnel. The protein is Large ribosomal subunit protein uL4 of Streptococcus agalactiae serotype Ia (strain ATCC 27591 / A909 / CDC SS700).